A 111-amino-acid polypeptide reads, in one-letter code: Probable 4-amino-4-deoxy-L-arabinose-phosphoundecaprenol flippase subunit ArnE (111 aa).

The Cytoplasmic portion of the chain corresponds to 1-35 (MIWLTLVFASLLSVAGQLCQKQATCFVAINKRRKH). The helical transmembrane segment at 36-56 (IVLWLGLALACLGLAMVLWLL) threads the bilayer. Residues 40–109 (LGLALACLGL…IIGGIVILGS (70 aa)) form the EamA domain. At 57–60 (VLQN) the chain is on the periplasmic side. A helical membrane pass occupies residues 61–81 (VPVGIAYPMLSLNFVWVTLAA). Over 82-87 (VKLWHE) the chain is Cytoplasmic. The chain crosses the membrane as a helical span at residues 88-108 (PVSPRHWCGVAFIIGGIVILG). Over 109–111 (STV) the chain is Periplasmic.

This sequence belongs to the ArnE family. Heterodimer of ArnE and ArnF.

It localises to the cell inner membrane. It participates in bacterial outer membrane biogenesis; lipopolysaccharide biosynthesis. Functionally, translocates 4-amino-4-deoxy-L-arabinose-phosphoundecaprenol (alpha-L-Ara4N-phosphoundecaprenol) from the cytoplasmic to the periplasmic side of the inner membrane. The protein is Probable 4-amino-4-deoxy-L-arabinose-phosphoundecaprenol flippase subunit ArnE of Escherichia coli (strain ATCC 8739 / DSM 1576 / NBRC 3972 / NCIMB 8545 / WDCM 00012 / Crooks).